The primary structure comprises 34 residues: Conotoxin Cl6d (34 aa).

3 disulfide bridges follow: Cys-4–Cys-19, Cys-12–Cys-29, and Cys-18–Cys-33. 4-hydroxyproline occurs at positions 14 and 21.

In terms of tissue distribution, expressed by the venom duct.

The protein localises to the secreted. The chain is Conotoxin Cl6d from Californiconus californicus (California cone).